The chain runs to 383 residues: Succinyl-diaminopimelate desuccinylase (383 aa).

His73 is a Zn(2+) binding site. Asp75 is an active-site residue. Zn(2+) is bound at residue Asp107. Glu141 acts as the Proton acceptor in catalysis. The Zn(2+) site is built by Glu142, Glu170, and His356.

It belongs to the peptidase M20A family. DapE subfamily. In terms of assembly, homodimer. Zn(2+) is required as a cofactor. The cofactor is Co(2+).

The catalysed reaction is N-succinyl-(2S,6S)-2,6-diaminopimelate + H2O = (2S,6S)-2,6-diaminopimelate + succinate. It functions in the pathway amino-acid biosynthesis; L-lysine biosynthesis via DAP pathway; LL-2,6-diaminopimelate from (S)-tetrahydrodipicolinate (succinylase route): step 3/3. In terms of biological role, catalyzes the hydrolysis of N-succinyl-L,L-diaminopimelic acid (SDAP), forming succinate and LL-2,6-diaminopimelate (DAP), an intermediate involved in the bacterial biosynthesis of lysine and meso-diaminopimelic acid, an essential component of bacterial cell walls. In Pseudomonas fluorescens (strain ATCC BAA-477 / NRRL B-23932 / Pf-5), this protein is Succinyl-diaminopimelate desuccinylase.